The sequence spans 91 residues: Alpha-defensin-related sequence 10 (91 aa).

Positions 1-19 are cleaved as a signal peptide; the sequence is MKKLVLLSAFVLLAFQVQA. Residues 20-65 constitute a propeptide that is removed on maturation; it reads DSIQNTDEETKTEEQPGEENQAMSVSFGDPEGSALQDAAVGMARPC. Positions 21–52 are disordered; the sequence is SIQNTDEETKTEEQPGEENQAMSVSFGDPEGS. 7 consecutive repeat copies span residues 65–67, 68–70, 71–73, 74–76, 77–79, 80–82, and 83–85. A 7 X 3 AA tandem repeats of C-P-X region spans residues 65–85; the sequence is CPPCPSCPSCPWCPMCPRCPS.

It belongs to the alpha-defensin family. In terms of tissue distribution, paneth cells of the small bowel.

It is found in the secreted. Its function is as follows. Apparent precursor of a secreted, cationic, proline- and cysteine-rich peptide that contains Cys-Pro-Xaa repeats. Unlike cryptdin, the proposed mature peptide region lacks the structural motif characteristic of defensins. It may have microbicidal activities. This Mus musculus (Mouse) protein is Alpha-defensin-related sequence 10 (Defa-rs10).